A 159-amino-acid chain; its full sequence is 3-hydroxyacyl-[acyl-carrier-protein] dehydratase FabZ (159 aa).

Residue H58 is part of the active site.

The protein belongs to the thioester dehydratase family. FabZ subfamily.

Its subcellular location is the cytoplasm. The enzyme catalyses a (3R)-hydroxyacyl-[ACP] = a (2E)-enoyl-[ACP] + H2O. Its function is as follows. Involved in unsaturated fatty acids biosynthesis. Catalyzes the dehydration of short chain beta-hydroxyacyl-ACPs and long chain saturated and unsaturated beta-hydroxyacyl-ACPs. In Helicobacter pylori (strain Shi470), this protein is 3-hydroxyacyl-[acyl-carrier-protein] dehydratase FabZ.